The following is a 207-amino-acid chain: Outer-membrane lipoprotein LolB (207 aa).

Positions 1-21 (MPLPDFRLIRLLPLAALVLTA) are cleaved as a signal peptide. A lipid anchor (N-palmitoyl cysteine) is attached at Cys-22. A lipid anchor (S-diacylglycerol cysteine) is attached at Cys-22.

The protein belongs to the LolB family. In terms of assembly, monomer.

It localises to the cell outer membrane. In terms of biological role, plays a critical role in the incorporation of lipoproteins in the outer membrane after they are released by the LolA protein. The polypeptide is Outer-membrane lipoprotein LolB (Shigella dysenteriae serotype 1 (strain Sd197)).